The primary structure comprises 424 residues: Hemagglutinin-esterase (424 aa).

2 consecutive signal peptides follow at residues 1–16 (MFLLLRFVLVSCIIGS) and 1–18 (MFLLLRFVLVSCIIGSLG). Positions 7–127 (FVLVSCIIGS…SNDIWMQNKG (121 aa)) are esterase domain 1. The Virion surface segment spans residues 17 to 392 (LGFDNPPTNV…PICVYDPLPL (376 aa)). The Nucleophile role is filled by serine 40. Cysteine 44 and cysteine 65 are oxidised to a cystine. N-linked (GlcNAc...) asparagine; by host glycans are attached at residues asparagine 54, asparagine 89, asparagine 153, asparagine 236, and asparagine 301. 3 disulfides stabilise this stretch: cysteine 113/cysteine 162, cysteine 197/cysteine 276, and cysteine 205/cysteine 249. The receptor binding stretch occupies residues 128–266 (LFYTQVYKNM…GNYLAISNEL (139 aa)). The segment at 267–379 (LLTVPTKAIC…RCPTAADINT (113 aa)) is esterase domain 2. A disulfide bond links cysteine 307 and cysteine 312. A glycan (N-linked (GlcNAc...) asparagine; by host) is linked at asparagine 316. Residues aspartate 326 and histidine 329 each act as charge relay system in the active site. A disulfide bond links cysteine 347 and cysteine 371. N-linked (GlcNAc...) asparagine; by host glycosylation occurs at asparagine 358. A helical membrane pass occupies residues 393–413 (ILLGILLGVAVIIIVVLLLYF). At 414–424 (MVDNGTRLHDA) the chain is on the intravirion side. N-linked (GlcNAc...) asparagine; by host glycosylation is present at asparagine 417.

The protein belongs to the influenza type C/coronaviruses hemagglutinin-esterase family. Homodimer; disulfide-linked. Forms a complex with the M protein in the pre-Golgi. Associates then with S-M complex to form a ternary complex S-M-HE. N-glycosylated in the host RER.

It is found in the virion membrane. Its subcellular location is the host cell membrane. The enzyme catalyses N-acetyl-9-O-acetylneuraminate + H2O = N-acetylneuraminate + acetate + H(+). It carries out the reaction N-acetyl-4-O-acetylneuraminate + H2O = N-acetylneuraminate + acetate + H(+). Structural protein that makes short spikes at the surface of the virus. Contains receptor binding and receptor-destroying activities. Mediates de-O-acetylation of N-acetyl-4-O-acetylneuraminic acid, which is probably the receptor determinant recognized by the virus on the surface of erythrocytes and susceptible cells. This receptor-destroying activity is important for virus release as it probably helps preventing self-aggregation and ensures the efficient spread of the progeny virus from cell to cell. May serve as a secondary viral attachment protein for initiating infection, the spike protein being the major one. May become a target for both the humoral and the cellular branches of the immune system. This chain is Hemagglutinin-esterase, found in Bos taurus (Bovine).